We begin with the raw amino-acid sequence, 1921 residues long: Putative callose synthase 6 (1921 aa).

The segment at 1–23 is disordered; that stretch reads MEASSSGTAELPRSLSRRAPSRA. At 1-492 the chain is on the cytoplasmic side; it reads MEASSSGTAE…FWNLFRDFDR (492 aa). Residues 493–513 traverse the membrane as a helical segment; sequence MWIFLVMAFQAMVIVGWHGSG. Topologically, residues 514-526 are extracellular; sequence SLGDIFDKDVFKT. Residues 527–547 traverse the membrane as a helical segment; that stretch reads VLTIFITSAYLTLLQAALDII. Residues 548–560 lie on the Cytoplasmic side of the membrane; the sequence is LNFNAWKNFKFSQ. The helical transmembrane segment at 561–581 threads the bilayer; sequence ILRYLLKFAVAFMWAVLLPIA. At 582–611 the chain is on the extracellular side; it reads YSKSVQRPTGVVKFFSTWTGDWKDQSFYTY. Residues 612–632 form a helical membrane-spanning segment; it reads AVSFYVLPNILAALLFLVPPF. Residues 633-674 are Cytoplasmic-facing; sequence RRAMECSDMRPIKVIMWWAQPKLYVGRGMHEDMFSLFKYTTF. The chain crosses the membrane as a helical span at residues 675–695; sequence WIMLLISKLAFNYYVEILPLI. Residues 696–721 are Extracellular-facing; it reads TPTKMIMNLHIGHYQWHEFFPHATNN. The chain crosses the membrane as a helical span at residues 722–742; it reads IGVVIAIWAPIVLVYLMDTQI. The Cytoplasmic segment spans residues 743–1484; the sequence is WYAIFSTLFG…FDFYRMLSFY (742 aa). A helical membrane pass occupies residues 1485–1505; sequence FTTIGFYFSSMLTVLTVYAFL. The Extracellular segment spans residues 1506 to 1540; it reads YGRMYMVMSGLEKEILRLASPNQLEALEQALATQS. Residues 1541-1561 traverse the membrane as a helical segment; sequence IFQLGFLMVLPMVMEIGLEHG. The Cytoplasmic segment spans residues 1562–1564; it reads FRS. The chain crosses the membrane as a helical span at residues 1565–1585; it reads AIVDFFIMQLQLASVFFTFQL. The Extracellular segment spans residues 1586–1628; that stretch reads GTKSHYYGRTILHGGSKYRPTGRGFVVFHAKFAENYRLYSRSH. The helical transmembrane segment at 1629–1649 threads the bilayer; the sequence is FVKGLELLLLLVVYQIYGHSY. The Cytoplasmic segment spans residues 1650 to 1655; it reads RSSNLY. The helical transmembrane segment at 1656 to 1676 threads the bilayer; sequence LYITVSMWFMVGSWLFAPFIF. At 1677-1730 the chain is on the extracellular side; that stretch reads NPSGFEWQKTVDDWTDWKRWLGDRGGIGIPVEKSWESWWNVEQEHLKHTSIRGR. A helical transmembrane segment spans residues 1731 to 1751; that stretch reads ILEITLALRFFIYQYGIVYQL. Residues 1752 to 1759 lie on the Cytoplasmic side of the membrane; sequence NISQRSKS. Residues 1760-1780 form a helical membrane-spanning segment; it reads FLVYGLSWVVLLTSLLVLKMV. Topologically, residues 1781–1796 are extracellular; that stretch reads SMGRRRFGTDFQLMFR. A helical transmembrane segment spans residues 1797–1817; it reads ILKALLFLGFLSVMTILFVVF. Topologically, residues 1818–1823 are cytoplasmic; it reads KLTLTD. A helical transmembrane segment spans residues 1824–1844; that stretch reads LSASVLAFLPTGWAILLIGQV. Over 1845-1867 the chain is Extracellular; sequence LRSPIKALGVWDSVKELGRAYEN. A helical membrane pass occupies residues 1868 to 1888; that stretch reads IMGLVIFAPIAVLSWFPIVSE. Residues 1889-1921 are Cytoplasmic-facing; that stretch reads FQARLLFNQAFSRGLQISMILAGRKDKATSSHK.

The protein belongs to the glycosyltransferase 48 family.

The protein resides in the cell membrane. It catalyses the reaction [(1-&gt;3)-beta-D-glucosyl](n) + UDP-alpha-D-glucose = [(1-&gt;3)-beta-D-glucosyl](n+1) + UDP + H(+). Its function is as follows. Probably involved in callose synthesis, but not required for callose formation after wounding or pathogen attack. During plant growth and development, callose is found as a transitory component of the cell plate in dividing cells, is a major component of pollen mother cell walls and pollen tubes, and is found as a structural component of plasmodesmatal canals. In Arabidopsis thaliana (Mouse-ear cress), this protein is Putative callose synthase 6 (CALS6).